Here is a 376-residue protein sequence, read N- to C-terminus: Protein-glutamate methylesterase/protein-glutamine glutaminase (376 aa).

The Response regulatory domain maps to 4–121 (KVLVVDDSSF…ARNRDEAVSL (118 aa)). D55 bears the 4-aspartylphosphate mark. The interval 142 to 161 (SSQSTSTVESRTATTRTATS) is disordered. The segment covering 145–161 (STSTVESRTATTRTATS) has biased composition (low complexity). One can recognise a CheB-type methylesterase domain in the interval 183–376 (TGKKYQLTAI…ERMLVEVGLK (194 aa)). Catalysis depends on residues S195, H222, and D318.

It belongs to the CheB family. In terms of processing, phosphorylated by CheA. Phosphorylation of the N-terminal regulatory domain activates the methylesterase activity.

Its subcellular location is the cytoplasm. It catalyses the reaction [protein]-L-glutamate 5-O-methyl ester + H2O = L-glutamyl-[protein] + methanol + H(+). It carries out the reaction L-glutaminyl-[protein] + H2O = L-glutamyl-[protein] + NH4(+). Functionally, involved in chemotaxis. Part of a chemotaxis signal transduction system that modulates chemotaxis in response to various stimuli. Catalyzes the demethylation of specific methylglutamate residues introduced into the chemoreceptors (methyl-accepting chemotaxis proteins or MCP) by CheR. Also mediates the irreversible deamidation of specific glutamine residues to glutamic acid. This is Protein-glutamate methylesterase/protein-glutamine glutaminase from Aliivibrio fischeri (strain ATCC 700601 / ES114) (Vibrio fischeri).